A 339-amino-acid chain; its full sequence is Serine racemase (339 aa).

Position 13 (Glu-13) interacts with Mg(2+). Positions 31, 32, 33, 51, and 52 each coordinate ATP. Catalysis depends on Lys-56, which acts as the Proton acceptor. Lys-56 carries the N6-(pyridoxal phosphate)lysine modification. Pro-69 lines the Ca(2+) pocket. Position 71 is a phosphothreonine (Thr-71). Residue Thr-81 coordinates Ca(2+). Ser-84 functions as the Proton acceptor in the catalytic mechanism. Pyridoxal 5'-phosphate is bound at residue Asn-86. Gln-89 contributes to the ATP binding site. At Cys-113 the chain carries S-nitrosocysteine. ATP is bound at residue Tyr-121. Position 154 (Asn-154) interacts with pyridoxal 5'-phosphate. Asp-178 contributes to the Mg(2+) binding site. Pyridoxal 5'-phosphate contacts are provided by Gly-185, Gly-186, Gly-187, Gly-188, and Met-189. Positions 210, 214, 216, and 247 each coordinate Mg(2+). Ca(2+)-binding residues include Glu-210, Ala-214, Asp-216, and Asn-247. Mn(2+) is bound by residues Glu-210, Ala-214, and Asp-216. ATP is bound at residue Lys-279. Ser-313 contacts pyridoxal 5'-phosphate. An ATP-binding site is contributed by Asn-316.

This sequence belongs to the serine/threonine dehydratase family. Homodimer. Mg(2+) serves as cofactor. Requires Mn(2+) as cofactor. Ca(2+) is required as a cofactor. It depends on pyridoxal 5'-phosphate as a cofactor. S-nitrosylated, leading to decrease the enzyme activity. Expressed in the hippocampus (at protein level). Expressed in the small intestine.

The enzyme catalyses L-serine = D-serine. It catalyses the reaction D-serine = pyruvate + NH4(+). The catalysed reaction is L-serine = pyruvate + NH4(+). Allosterically activated by magnesium, and possibly also other divalent metal cations. Allosterically activated by ATP, ADP or GTP. Catalyzes the synthesis of D-serine from L-serine. D-serine is a key coagonist with glutamate at NMDA receptors. Has dehydratase activity towards both L-serine and D-serine. In Mus musculus (Mouse), this protein is Serine racemase (Srr).